The primary structure comprises 90 residues: Small ribosomal subunit protein bS16 (90 aa).

This sequence belongs to the bacterial ribosomal protein bS16 family.

This is Small ribosomal subunit protein bS16 from Streptococcus pneumoniae (strain Hungary19A-6).